The sequence spans 209 residues: Fibroblast growth factor 10 (209 aa).

Positions 1 to 36 are cleaved as a signal peptide; the sequence is MWKWILTHCASAFPHLPGCCCCFLLLFLVSSFPVTC. 2 N-linked (GlcNAc...) asparagine glycosylation sites follow: asparagine 50 and asparagine 197.

This sequence belongs to the heparin-binding growth factors family. Interacts with FGFR1 and FGFR2. Interacts with FGFBP1. Expressed abundantly in embryos and the lung, and at much lower levels in brain and heart.

It is found in the secreted. Plays an important role in the regulation of embryonic development, cell proliferation and cell differentiation. Required for normal branching morphogenesis. May play a role in wound healing. This Mus musculus (Mouse) protein is Fibroblast growth factor 10 (Fgf10).